The primary structure comprises 24 residues: Coenzyme PQQ synthesis protein A (24 aa).

Residues 16–20 (EVTMY) constitute a cross-link (pyrroloquinoline quinone (Glu-Tyr)).

Belongs to the PqqA family.

The protein operates within cofactor biosynthesis; pyrroloquinoline quinone biosynthesis. Functionally, required for coenzyme pyrroloquinoline quinone (PQQ) biosynthesis. PQQ is probably formed by cross-linking a specific glutamate to a specific tyrosine residue and excising these residues from the peptide. In Acinetobacter baumannii (strain SDF), this protein is Coenzyme PQQ synthesis protein A.